We begin with the raw amino-acid sequence, 145 residues long: Cell wall synthesis protein CwsA (145 aa).

A helical membrane pass occupies residues 104–124; the sequence is WIFAGIAAAILAGGAVAFSIV.

The protein belongs to the CwsA family.

The protein localises to the cell membrane. Its function is as follows. Required for regulated cell division, cell wall synthesis and the maintenance of cell shape. This chain is Cell wall synthesis protein CwsA, found in Mycobacterium bovis (strain ATCC BAA-935 / AF2122/97).